A 393-amino-acid polypeptide reads, in one-letter code: 4-hydroxyphenylpyruvate dioxygenase (393 aa).

VOC domains follow at residues 17-148 (AFDH…LLER) and 179-339 (FLDH…IFSK). Positions 182, 267, and 350 each coordinate Fe cation.

Belongs to the 4HPPD family. It depends on Fe cation as a cofactor.

It catalyses the reaction 3-(4-hydroxyphenyl)pyruvate + O2 = homogentisate + CO2. It functions in the pathway amino-acid degradation; L-phenylalanine degradation; acetoacetate and fumarate from L-phenylalanine: step 3/6. Key enzyme in the degradation of tyrosine. The chain is 4-hydroxyphenylpyruvate dioxygenase (hpd-1) from Caenorhabditis briggsae.